A 345-amino-acid polypeptide reads, in one-letter code: N(4)-(Beta-N-acetylglucosaminyl)-L-asparaginase (345 aa).

A signal peptide spans 1-23; that stretch reads MARKWNLPFLLLPLVLGIPLVRG. Asn38 carries an N-linked (GlcNAc...) asparagine glycan. Cys64 and Cys69 form a disulfide bridge. N-linked (GlcNAc...) asparagine glycosylation occurs at Asn149. Cysteines 163 and 179 form a disulfide. Residue Thr205 is the Nucleophile of the active site. Residues 233–236 and 256–259 contribute to the substrate site; these read RVGD and TGDG. The cysteines at positions 285 and 305 are disulfide-linked. The N-linked (GlcNAc...) asparagine glycan is linked to Asn307. A disulfide bridge links Cys316 with Cys344.

It belongs to the Ntn-hydrolase family. As to quaternary structure, heterotetramer of two alpha and two beta chains arranged as a dimer of alpha/beta heterodimers. Post-translationally, N-glycosylated. In terms of processing, cleaved into an alpha and beta chain by autocatalysis; this activates the enzyme. The N-terminal residue of the beta subunit is responsible for the nucleophile hydrolase activity.

The protein localises to the lysosome. The catalysed reaction is N(4)-(beta-N-acetyl-D-glucosaminyl)-L-asparagine + H2O = N-acetyl-beta-D-glucosaminylamine + L-aspartate + H(+). In terms of biological role, cleaves the GlcNAc-Asn bond which joins oligosaccharides to the peptide of asparagine-linked glycoproteins. The protein is N(4)-(Beta-N-acetylglucosaminyl)-L-asparaginase (Aga) of Rattus norvegicus (Rat).